The following is a 423-amino-acid chain: Acaloleptin A (423 aa).

Positions 1 to 17 (MITKISLILFAVLLVSG) are cleaved as a signal peptide. Positions 18–26 (LEEEERWKR) are excised as a propeptide. Disordered stretches follow at residues 28-58 (LQPG…NTKT), 108-128 (INNK…DNGN), 180-203 (NVNN…GNTR), and 355-385 (SDDE…TRAD). The span at 34–43 (NVNNNDQPWQ) shows a compositional bias: polar residues. Residues 180–189 (NVNNKDQPWQ) are compositionally biased toward polar residues. The segment covering 357-366 (DEDEEEEEDQ) has biased composition (acidic residues). Residues 376-385 (RGDDGNTRAD) show a composition bias toward basic and acidic residues.

Belongs to the coleoptericin family. Hemolymph (at protein level). Larval fat body.

It is found in the secreted. In terms of biological role, acaloleptins A1-A4 show antibacterial activity against Gram-negative bacteria but not against Gram-positive bacteria. Acaloleptin A5 shows antibacterial activity against Gram-positive bacteria but not against Gram-negative bacteria, and may also have antifungal activity. This Acalolepta luxuriosa (Udo longhorn beetle) protein is Acaloleptin A.